The primary structure comprises 125 residues: Holo-[acyl-carrier-protein] synthase (125 aa).

Mg(2+) contacts are provided by Asp-8 and Glu-57.

This sequence belongs to the P-Pant transferase superfamily. AcpS family. Mg(2+) is required as a cofactor.

It is found in the cytoplasm. It carries out the reaction apo-[ACP] + CoA = holo-[ACP] + adenosine 3',5'-bisphosphate + H(+). Its function is as follows. Transfers the 4'-phosphopantetheine moiety from coenzyme A to a Ser of acyl-carrier-protein. This Geobacter sp. (strain M21) protein is Holo-[acyl-carrier-protein] synthase.